Reading from the N-terminus, the 197-residue chain is Peptide deformylase (197 aa).

C106 and H148 together coordinate Fe cation. Residue E149 is part of the active site. H152 contacts Fe cation.

The protein belongs to the polypeptide deformylase family. It depends on Fe(2+) as a cofactor.

The catalysed reaction is N-terminal N-formyl-L-methionyl-[peptide] + H2O = N-terminal L-methionyl-[peptide] + formate. Removes the formyl group from the N-terminal Met of newly synthesized proteins. Requires at least a dipeptide for an efficient rate of reaction. N-terminal L-methionine is a prerequisite for activity but the enzyme has broad specificity at other positions. This chain is Peptide deformylase, found in Mycobacterium ulcerans (strain Agy99).